Here is a 93-residue protein sequence, read N- to C-terminus: UPF0213 protein CPE1444 (93 aa).

The 75-residue stretch at Met-1–Gln-75 folds into the GIY-YIG domain.

This sequence belongs to the UPF0213 family.

The sequence is that of UPF0213 protein CPE1444 from Clostridium perfringens (strain 13 / Type A).